The primary structure comprises 162 residues: Probable chemoreceptor glutamine deamidase CheD (162 aa).

Belongs to the CheD family.

It carries out the reaction L-glutaminyl-[protein] + H2O = L-glutamyl-[protein] + NH4(+). Probably deamidates glutamine residues to glutamate on methyl-accepting chemotaxis receptors (MCPs), playing an important role in chemotaxis. The sequence is that of Probable chemoreceptor glutamine deamidase CheD from Pyrococcus horikoshii (strain ATCC 700860 / DSM 12428 / JCM 9974 / NBRC 100139 / OT-3).